Here is a 173-residue protein sequence, read N- to C-terminus: Globin-like host-protective antigen (173 aa).

A signal peptide spans 1–15; that stretch reads MRFLLLAAFVAYAYA. The Globin domain occupies 25 to 166; that stretch reads ALSALDVVPL…FNDEAQKQLA (142 aa). Residue His114 participates in heme b binding.

This sequence belongs to the globin family.

It localises to the secreted. The protein localises to the extracellular space. Functionally, may be a globin and may play a role in oxygen transport. This is Globin-like host-protective antigen from Trichostrongylus colubriformis (Black scour worm).